The following is a 65-amino-acid chain: Metallothionein-like protein 3B (65 aa).

The protein belongs to the metallothionein superfamily. Type 15 family. Expressed in leaves and rachis.

In terms of biological role, metallothioneins have a high content of cysteine residues that bind various heavy metals. The polypeptide is Metallothionein-like protein 3B (MT3B) (Oryza sativa subsp. japonica (Rice)).